The primary structure comprises 341 residues: 2-acylglycerol O-acyltransferase 3 (341 aa).

Transmembrane regions (helical) follow at residues 29 to 49 and 50 to 70; these read YVLT…VLLF and TSLW…WDTP. Asparagine 126 carries N-linked (GlcNAc...) asparagine glycosylation. A helical transmembrane segment spans residues 137-157; the sequence is LFPGLRPWLAVLAGLFYLPVY.

Belongs to the diacylglycerol acyltransferase family. Post-translationally, ubiquitinated. Ubiquitination leads to proteasomal degradation. As to expression, selectively expressed in the digestive system. Highly expressed in the ileum, and at lower level in jejunum, duodenum, colon, cecum and the rectum. Not expressed in the stomach and the esophagus and trachea. Expressed at very low level in liver.

Its subcellular location is the endoplasmic reticulum membrane. The protein localises to the cytoplasm. It is found in the perinuclear region. The enzyme catalyses a 2-acylglycerol + an acyl-CoA = a 1,2-diacylglycerol + CoA. The catalysed reaction is an acyl-CoA + a 1,2-diacyl-sn-glycerol = a triacyl-sn-glycerol + CoA. It catalyses the reaction 2-(9Z-octadecenoyl)-glycerol + (9Z)-octadecenoyl-CoA = 1,2-di-(9Z-octadecenoyl)-sn-glycerol + CoA. It carries out the reaction 2-(9Z-octadecenoyl)-glycerol + hexadecanoyl-CoA = 1-hexadecanoyl-2-(9Z-octadecenoyl)-sn-glycerol + CoA. The enzyme catalyses 1,2-di-(9Z-octadecenoyl)-sn-glycerol + (9Z)-octadecenoyl-CoA = 1,2,3-tri-(9Z-octadecenoyl)-glycerol + CoA. The catalysed reaction is 1-hexadecanoyl-2-(9Z-octadecenoyl)-sn-glycerol + hexadecanoyl-CoA = 1,3-dihexadecanoyl-2-(9Z-octadecenoyl)glycerol + CoA. It catalyses the reaction all-trans-retinol + hexadecanoyl-CoA = all-trans-retinyl hexadecanoate + CoA. It carries out the reaction 1-O-(9Z-octadecenyl)-glycerol + (9Z)-octadecenoyl-CoA = 1-O-(9Z-octadecyl)-3-(9Z-octadecenoyl)-glycerol + CoA. The enzyme catalyses 1-O-(9Z-octadecyl)-3-(9Z-octadecenoyl)-glycerol + (9Z)-octadecenoyl-CoA = 1-O-(9Z-octadecenyl)-2,3-di-(9Z-octadecenoyl)glycerol + CoA. The protein operates within glycerolipid metabolism; triacylglycerol biosynthesis. Catalyzes the formation of diacylglycerol from 2-monoacylglycerol and fatty acyl-CoA. Also able to catalyze the terminal step in triacylglycerol synthesis by using diacylglycerol and fatty acyl-CoA as substrates. Has a preference toward palmitoyl-CoA and oleoyl-CoA. May be involved in absorption of dietary fat in the small intestine by catalyzing the resynthesis of triacylglycerol in enterocytes. Also able to use 1-monoalkylglycerol (1-MAkG) as an acyl acceptor for the synthesis of monoalkyl-monoacylglycerol (MAMAG). This is 2-acylglycerol O-acyltransferase 3 from Homo sapiens (Human).